The primary structure comprises 411 residues: S-adenosylmethionine synthase (411 aa).

His15 contacts ATP. Residue Asp17 coordinates Mg(2+). Glu43 lines the K(+) pocket. 2 residues coordinate L-methionine: Glu56 and Gln99. Residues 99–109 (QSPDIAQGVDT) are flexible loop. ATP contacts are provided by residues 174–176 (DGK), 247–248 (RF), Asp256, 262–263 (RK), Ala279, and Lys283. Asp256 provides a ligand contact to L-methionine. Lys287 contributes to the L-methionine binding site.

This sequence belongs to the AdoMet synthase family. Homotetramer; dimer of dimers. The cofactor is Mg(2+). K(+) serves as cofactor.

The protein resides in the cytoplasm. It catalyses the reaction L-methionine + ATP + H2O = S-adenosyl-L-methionine + phosphate + diphosphate. The protein operates within amino-acid biosynthesis; S-adenosyl-L-methionine biosynthesis; S-adenosyl-L-methionine from L-methionine: step 1/1. Catalyzes the formation of S-adenosylmethionine (AdoMet) from methionine and ATP. The overall synthetic reaction is composed of two sequential steps, AdoMet formation and the subsequent tripolyphosphate hydrolysis which occurs prior to release of AdoMet from the enzyme. This is S-adenosylmethionine synthase from Streptomyces spectabilis.